Consider the following 434-residue polypeptide: Serine hydroxymethyltransferase (434 aa).

(6S)-5,6,7,8-tetrahydrofolate contacts are provided by residues Leu124 and Gly128–Leu130. Lys233 carries the N6-(pyridoxal phosphate)lysine modification. A (6S)-5,6,7,8-tetrahydrofolate-binding site is contributed by Glu249.

It belongs to the SHMT family. In terms of assembly, homodimer. The cofactor is pyridoxal 5'-phosphate.

The protein localises to the cytoplasm. The catalysed reaction is (6R)-5,10-methylene-5,6,7,8-tetrahydrofolate + glycine + H2O = (6S)-5,6,7,8-tetrahydrofolate + L-serine. Its pathway is one-carbon metabolism; tetrahydrofolate interconversion. It functions in the pathway amino-acid biosynthesis; glycine biosynthesis; glycine from L-serine: step 1/1. Catalyzes the reversible interconversion of serine and glycine with tetrahydrofolate (THF) serving as the one-carbon carrier. This reaction serves as the major source of one-carbon groups required for the biosynthesis of purines, thymidylate, methionine, and other important biomolecules. Also exhibits THF-independent aldolase activity toward beta-hydroxyamino acids, producing glycine and aldehydes, via a retro-aldol mechanism. This is Serine hydroxymethyltransferase from Synechococcus sp. (strain JA-3-3Ab) (Cyanobacteria bacterium Yellowstone A-Prime).